Here is a 300-residue protein sequence, read N- to C-terminus: Glutamyl-Q tRNA(Asp) synthetase (300 aa).

Residues 14–18 (RFAPT) and E50 contribute to the L-glutamate site. A 'HIGH' region motif is present at residues 17–27 (PTPSGFLHFGS). Residues C106, C108, Y120, and C124 each contribute to the Zn(2+) site. Y177 and R195 together coordinate L-glutamate. Residues 233–237 (KLGKS) carry the 'KMSKS' region motif. ATP is bound at residue K236.

It belongs to the class-I aminoacyl-tRNA synthetase family. GluQ subfamily. Zn(2+) serves as cofactor.

Functionally, catalyzes the tRNA-independent activation of glutamate in presence of ATP and the subsequent transfer of glutamate onto a tRNA(Asp). Glutamate is transferred on the 2-amino-5-(4,5-dihydroxy-2-cyclopenten-1-yl) moiety of the queuosine in the wobble position of the QUC anticodon. In Pseudomonas putida (strain ATCC 700007 / DSM 6899 / JCM 31910 / BCRC 17059 / LMG 24140 / F1), this protein is Glutamyl-Q tRNA(Asp) synthetase.